The sequence spans 334 residues: Ornithine carbamoyltransferase, catabolic (334 aa).

Residues 57–60 (STRT), Gln-84, Arg-108, and 135–138 (HPTQ) each bind carbamoyl phosphate. L-ornithine contacts are provided by residues Asn-168, Asp-232, and 236–237 (SM). Residues 274–275 (CL) and Arg-321 each bind carbamoyl phosphate.

It belongs to the aspartate/ornithine carbamoyltransferase superfamily. OTCase family.

The protein localises to the cytoplasm. The catalysed reaction is carbamoyl phosphate + L-ornithine = L-citrulline + phosphate + H(+). It participates in amino-acid degradation; L-arginine degradation via ADI pathway; carbamoyl phosphate from L-arginine: step 2/2. Reversibly catalyzes the transfer of the carbamoyl group from carbamoyl phosphate (CP) to the N(epsilon) atom of ornithine (ORN) to produce L-citrulline. The sequence is that of Ornithine carbamoyltransferase, catabolic (arcB) from Avibacterium paragallinarum (Haemophilus gallinarum).